The primary structure comprises 165 residues: Methylated-DNA--protein-cysteine methyltransferase, constitutive (165 aa).

C130 (nucleophile; methyl group acceptor) is an active-site residue.

The protein belongs to the MGMT family.

Its subcellular location is the cytoplasm. The catalysed reaction is a 6-O-methyl-2'-deoxyguanosine in DNA + L-cysteinyl-[protein] = S-methyl-L-cysteinyl-[protein] + a 2'-deoxyguanosine in DNA. It catalyses the reaction a 4-O-methyl-thymidine in DNA + L-cysteinyl-[protein] = a thymidine in DNA + S-methyl-L-cysteinyl-[protein]. Functionally, involved in the cellular defense against the biological effects of O6-methylguanine (O6-MeG) and O4-methylthymine (O4-MeT) in DNA. Repairs the methylated nucleobase in DNA by stoichiometrically transferring the methyl group to a cysteine residue in the enzyme. This is a suicide reaction: the enzyme is irreversibly inactivated. The polypeptide is Methylated-DNA--protein-cysteine methyltransferase, constitutive (Bacillus subtilis (strain 168)).